The chain runs to 434 residues: RNA-binding protein SRO9 (434 aa).

Residues 1 to 13 (MSAETAAANTATA) show a composition bias toward low complexity. The tract at residues 1-243 (MSAETAAANT…FHHNQQHPQQ (243 aa)) is disordered. Polar residues predominate over residues 26-41 (SKQVNLTPAPLPTSSP). S55 carries the phosphoserine modification. The segment covering 93–124 (KRSGSKNGASNGNSNKSKNNKTAASSTSSSNA) has biased composition (low complexity). Positions 125–140 (NRKKKHHQHNAKKQQQ) are enriched in basic residues. The residue at position 148 (S148) is a Phosphoserine. A Glycyl lysine isopeptide (Lys-Gly) (interchain with G-Cter in ubiquitin) cross-link involves residue K156. Residues 158–167 (ATSQENGQST) show a composition bias toward polar residues. Over residues 173–195 (PHHRNHHHSHHHNSNGPQRRKFH) the composition is skewed to basic residues. Polar residues predominate over residues 196–208 (NSNNAGMPQNQGF). Residues 218–227 (RNARNNNNNR) show a composition bias toward low complexity. Residues 228–238 (SKYHNHFHHNQ) show a composition bias toward basic residues. In terms of domain architecture, HTH La-type RNA-binding spans 255-351 (VQPVLMAINN…KEGDNVTGEA (97 aa)). Residues K301, K342, and K352 each participate in a glycyl lysine isopeptide (Lys-Gly) (interchain with G-Cter in ubiquitin) cross-link. Residues 396 to 434 (SLPPVPQQEEESSTELASQEQETKEDSAPVAAGESESSL) form a disordered region. At S422 the chain carries Phosphoserine.

In terms of assembly, interacts with HAP1. Component of the HMC including HAP1, SRO9 and YDJ1.

The protein localises to the cytoplasm. May overlap in function with tropomyosin and may be involved in organization of actin filaments. Acts as a multicopy suppressor of RHO3 mutation. RNA-binding protein which may modulate mRNA translation. Involved in heme regulation of HAP1, as a component of the high-molecular-weight complex (HMC). The polypeptide is RNA-binding protein SRO9 (SRO9) (Saccharomyces cerevisiae (strain ATCC 204508 / S288c) (Baker's yeast)).